A 177-amino-acid polypeptide reads, in one-letter code: Small ribosomal subunit protein uS5 (177 aa).

The 64-residue stretch at 19-82 folds into the S5 DRBM domain; that stretch reads WQERVVQIRR…ADGKKQLVEV (64 aa).

The protein belongs to the universal ribosomal protein uS5 family. In terms of assembly, part of the 30S ribosomal subunit. Contacts proteins S4 and S8.

In terms of biological role, with S4 and S12 plays an important role in translational accuracy. Located at the back of the 30S subunit body where it stabilizes the conformation of the head with respect to the body. This Acaryochloris marina (strain MBIC 11017) protein is Small ribosomal subunit protein uS5.